A 142-amino-acid chain; its full sequence is Hemoglobin subunit theta-1 (142 aa).

Residues 2–142 enclose the Globin domain; sequence ALSAEDRALV…VISALASEYR (141 aa). Heme b contacts are provided by histidine 59 and histidine 88.

It belongs to the globin family.

This Pongo pygmaeus (Bornean orangutan) protein is Hemoglobin subunit theta-1 (HBQ1).